The following is a 195-amino-acid chain: Thymidylate kinase (195 aa).

7–14 (GVDTCGKS) lines the ATP pocket.

The protein belongs to the thymidylate kinase family.

It catalyses the reaction dTMP + ATP = dTDP + ADP. Phosphorylation of dTMP to form dTDP in both de novo and salvage pathways of dTTP synthesis. This is Thymidylate kinase from Helicobacter hepaticus (strain ATCC 51449 / 3B1).